The chain runs to 820 residues: MAITRRSFLKGVATTSAASIIGPSLLTSVSAQAAETTGTWKVSGSHWGAFRAHIYGGKVQELKALELDTHPTEMLNGIQGILYSPSRVRYPMVRLDWLKKHKYSAETRGNNRFIRVTWDEAIDLFYRELERVQKQYGPWALHAGQTGWNQTGAFHNCTAMMQRAVGMHGNYITKVGDYSTGAGQTIMPYVLGSTEVYAQGTSWSEILDNSDNIILWANDPVKNLQVGWNCETHQSFGYLDQLKEKVAKGEINVVSVDPVKNKTQRFLQNDHLYINPQTDVAFMLALAHVLYTENLYDKKFIETYCLGFEEFIPYVLGKSKDKVEKTPEWAATICGVKPDAIRDFARMLVNGRTQLLFGWCIQRQEHGEQPYWMGAVLAAMIGQIGLPGGGISYGHHYSGIGVPSTGFAGPGGFPRNLDQGAKPKWDNNDFNGYSRTIPVARWIDAILEPGKKINHNGNTVTLPGFKMMVISGCNPWHHHQDRNKMKRAFQKLETVVTIDFSWTATCRFSDIVLPACTQWERNDIDSYGSYSGKGLIAMHRLVDPLFQSRTDFEIMTELTRRFGREKEYTRGMDEMEWVRSLYDECKKANEGKFAMPEFEEFWEKGFLDFGTGTPWVRHADFRKDPEINALGTPSGFIEITSRKIGRYGYEHCQEHPMWFEKTERSHGGPGSDKHPFWLQSCHPDKRLHSQMCEAEAFRATYAVQGREPVYINPLDAKAKGIKDGDLVRVFNDRGQLLAGAVLSDSYPRGVIRIEEGAWYGPLTEKVGAICTYGDPNTLTLDLGTSELAQATSANTCIVDFEKFRGEVPPVTSFGGPIEVI.

The tat-type signal signal peptide spans Met1 to Ala33. Ser179 contacts Mo-bis(molybdopterin guanine dinucleotide).

The protein belongs to the prokaryotic molybdopterin-containing oxidoreductase family. The cofactor is Mo-bis(molybdopterin guanine dinucleotide). Post-translationally, predicted to be exported by the Tat system. The position of the signal peptide cleavage has not been experimentally proven.

The protein localises to the periplasm. The enzyme catalyses trimethylamine + 2 Fe(III)-[cytochrome c] + H2O = trimethylamine N-oxide + 2 Fe(II)-[cytochrome c] + 3 H(+). In terms of biological role, reduces trimethylamine-N-oxide (TMAO) into trimethylamine; an anaerobic reaction coupled to energy-yielding reactions. The chain is Trimethylamine-N-oxide reductase (torA) from Vibrio cholerae serotype O1 (strain ATCC 39315 / El Tor Inaba N16961).